We begin with the raw amino-acid sequence, 363 residues long: UDP-N-acetylglucosamine--N-acetylmuramyl-(pentapeptide) pyrophosphoryl-undecaprenol N-acetylglucosamine transferase (363 aa).

UDP-N-acetyl-alpha-D-glucosamine is bound by residues 12-14 (TGG), asparagine 122, arginine 164, serine 191, isoleucine 245, and glutamine 290.

Belongs to the glycosyltransferase 28 family. MurG subfamily.

It is found in the cell membrane. The catalysed reaction is di-trans,octa-cis-undecaprenyl diphospho-N-acetyl-alpha-D-muramoyl-L-alanyl-D-glutamyl-meso-2,6-diaminopimeloyl-D-alanyl-D-alanine + UDP-N-acetyl-alpha-D-glucosamine = di-trans,octa-cis-undecaprenyl diphospho-[N-acetyl-alpha-D-glucosaminyl-(1-&gt;4)]-N-acetyl-alpha-D-muramoyl-L-alanyl-D-glutamyl-meso-2,6-diaminopimeloyl-D-alanyl-D-alanine + UDP + H(+). The protein operates within cell wall biogenesis; peptidoglycan biosynthesis. Functionally, cell wall formation. Catalyzes the transfer of a GlcNAc subunit on undecaprenyl-pyrophosphoryl-MurNAc-pentapeptide (lipid intermediate I) to form undecaprenyl-pyrophosphoryl-MurNAc-(pentapeptide)GlcNAc (lipid intermediate II). The polypeptide is UDP-N-acetylglucosamine--N-acetylmuramyl-(pentapeptide) pyrophosphoryl-undecaprenol N-acetylglucosamine transferase (Lawsonia intracellularis (strain PHE/MN1-00)).